The chain runs to 320 residues: PUP1 protein homolog (320 aa).

Transmembrane regions (helical) follow at residues 66 to 85 (MWGG…AYRY) and 100 to 119 (FVLG…RSMY). A disordered region spans residues 205-320 (GGVFNGSPFM…QSGRYGGNRS (116 aa)). The residue at position 230 (Ser230) is a Phosphoserine. Positions 253-266 (GDNSSSSSWENIRN) are enriched in polar residues. Basic and acidic residues predominate over residues 267-284 (TSRDQSQESDASVDHESD).

It belongs to the PUP1 family.

Its subcellular location is the mitochondrion membrane. This is PUP1 protein homolog from Saccharomyces cerevisiae (strain ATCC 204508 / S288c) (Baker's yeast).